Here is a 357-residue protein sequence, read N- to C-terminus: Protein-arginine kinase (357 aa).

A Phosphagen kinase C-terminal domain is found at 24–255 (IVISTRLRIA…RQIIEQERVA (232 aa)). Residues 27–31 (STRLR), His-92, Arg-126, 177–181 (RASVM), and 208–213 (RGIYGE) contribute to the ATP site. The RDXXRA motif of the pArg binding pocket involved in allosteric regulation signature appears at 338–343 (RDERRA).

It belongs to the ATP:guanido phosphotransferase family.

It catalyses the reaction L-arginyl-[protein] + ATP = N(omega)-phospho-L-arginyl-[protein] + ADP + H(+). With respect to regulation, appears to be allosterically activated by the binding of pArg-containing polypeptides to the pArg-binding pocket localized in the C-terminal domain of McsB. In terms of biological role, catalyzes the specific phosphorylation of arginine residues in proteins. This chain is Protein-arginine kinase, found in Brevibacillus brevis (strain 47 / JCM 6285 / NBRC 100599).